The following is a 426-amino-acid chain: Histidine--tRNA ligase (426 aa).

The protein belongs to the class-II aminoacyl-tRNA synthetase family.

The protein resides in the cytoplasm. It carries out the reaction tRNA(His) + L-histidine + ATP = L-histidyl-tRNA(His) + AMP + diphosphate + H(+). In Saccharolobus islandicus (strain M.16.27) (Sulfolobus islandicus), this protein is Histidine--tRNA ligase.